The chain runs to 284 residues: F-box protein PP2-B5 (284 aa).

An F-box domain is found at 32–80 (ASFDDLPDDCLAIISSFTSTPRDAFLAALVSKSFGLQFNSDSVWEKFLP).

The sequence is that of F-box protein PP2-B5 (PP2B5) from Arabidopsis thaliana (Mouse-ear cress).